Consider the following 300-residue polypeptide: GTPase Era (300 aa).

The 168-residue stretch at 5 to 172 folds into the Era-type G domain; it reads HSGFVAIIGR…LTALTDALPV (168 aa). Positions 13-20 are G1; the sequence is GRPNVGKS. 13-20 lines the GTP pocket; sequence GRPNVGKS. A G2 region spans residues 39–43; that stretch reads QTTRN. Residues 60-63 are G3; the sequence is DTPG. GTP is bound by residues 60 to 64 and 122 to 125; these read DTPGI and NKID. A G4 region spans residues 122-125; sequence NKID. The G5 stretch occupies residues 151 to 153; sequence ISA. One can recognise a KH type-2 domain in the interval 203–280; sequence TRDEVPHAVA…NLKLWVRVQK (78 aa).

The protein belongs to the TRAFAC class TrmE-Era-EngA-EngB-Septin-like GTPase superfamily. Era GTPase family. Monomer.

The protein localises to the cytoplasm. It localises to the cell membrane. An essential GTPase that binds both GDP and GTP, with rapid nucleotide exchange. Plays a role in 16S rRNA processing and 30S ribosomal subunit biogenesis and possibly also in cell cycle regulation and energy metabolism. This is GTPase Era from Lacticaseibacillus paracasei (strain ATCC 334 / BCRC 17002 / CCUG 31169 / CIP 107868 / KCTC 3260 / NRRL B-441) (Lactobacillus paracasei).